The sequence spans 501 residues: Monocarboxylate transporter 1 (501 aa).

Over 1–22 (MPPAVGGPVGYTPPDGGWGWAV) the chain is Cytoplasmic. The chain crosses the membrane as a helical span at residues 23–44 (VIGAFISIGFSYAFPKSITVFF). Residue K38 participates in (S)-lactate binding. Residues 45-55 (KEIEGIFNATT) lie on the Extracellular side of the membrane. A helical transmembrane segment spans residues 56-80 (SEVSWISSIMLAVMYGGGPISSVLV). At 81–84 (NKYG) the chain is on the cytoplasmic side. Residues 85–105 (SRPVMIVGGILSGSGLIAASF) form a helical membrane-spanning segment. At 106-109 (CNTV) the chain is on the extracellular side. Residues 110-132 (QELYFSVGVIGGLGLAFNLNPAL) form a helical membrane-spanning segment. Over 133–146 (TMIGKYFYKRRPLA) the chain is Cytoplasmic. A helical transmembrane segment spans residues 147-169 (NGLAMAGSPVFLSTLAPLNQAFF). Topologically, residues 170 to 174 (MIYGW) are extracellular. A helical transmembrane segment spans residues 175-194 (RGSFLILGGLLLNCCVAGAL). Residues 195 to 261 (MRPIGPKPTT…FLDLSLFKHR (67 aa)) lie on the Cytoplasmic side of the membrane. The tract at residues 201–236 (KPTTAEKEKSKGSLQEAGKYETKKGASDANTDLIGG) is disordered. Residues S210, S213, and S227 each carry the phosphoserine modification. Residue T231 is modified to Phosphothreonine. The helical transmembrane segment at 262-288 (GFLLYLSGNVLMFFGLFTPLVFLSNYG) threads the bilayer. Residues 289–295 (KSKHYSS) are Extracellular-facing. The helical transmembrane segment at 296 to 317 (EKAAFLLSILAFVDMVARPSMG) threads the bilayer. Residue D309 participates in H(+) binding. R313 contacts (S)-lactate. The Cytoplasmic segment spans residues 318–328 (LVANTKWVRPR). Residues 329 to 349 (VQYFFAASIIANGLCHLAAPL) traverse the membrane as a helical segment. Residues 350–353 (SSTY) lie on the Extracellular side of the membrane. Residues 354–375 (IELCIYAGFFGFAFGWLSSVLF) traverse the membrane as a helical segment. Residues 376–389 (ETLMDLVGPQRFSS) lie on the Cytoplasmic side of the membrane. Residues 390 to 410 (AVGLVTIVECCPVLLGPPVLG) traverse the membrane as a helical segment. The Extracellular segment spans residues 411–421 (RLNDIYGDYKY). The chain crosses the membrane as a helical span at residues 422-443 (TYWACGIILIVAGIYLFIGMGI). The Cytoplasmic segment spans residues 444-501 (NYRLLEKEQKAEKQQKKESKDEETNVDVAEKPKEVIDAAESPEHKATEEDPKEAESPV). Positions 454-501 (AEKQQKKESKDEETNVDVAEKPKEVIDAAESPEHKATEEDPKEAESPV) are disordered. Phosphoserine is present on S462. T467 bears the Phosphothreonine mark. Phosphoserine occurs at positions 484 and 499.

The protein belongs to the major facilitator superfamily. Monocarboxylate porter (TC 2.A.1.13) family. Interacts with BSG; interaction mediates SLC16A1 targeting to the plasma membrane. Interacts with EMB; interaction mediates SLC16A1 targeting to the plasma membrane.

It is found in the cell membrane. The protein localises to the basolateral cell membrane. The protein resides in the apical cell membrane. The enzyme catalyses (S)-lactate(in) + H(+)(in) = (S)-lactate(out) + H(+)(out). The catalysed reaction is acetate(out) + H(+)(out) = acetate(in) + H(+)(in). It catalyses the reaction acetoacetate(out) + H(+)(out) = acetoacetate(in) + H(+)(in). It carries out the reaction pyruvate(out) + H(+)(out) = pyruvate(in) + H(+)(in). The enzyme catalyses (R)-3-hydroxybutanoate(out) + H(+)(out) = (R)-3-hydroxybutanoate(in) + H(+)(in). The catalysed reaction is 3-methyl-2-oxobutanoate(out) + H(+)(out) = 3-methyl-2-oxobutanoate(in) + H(+)(in). It catalyses the reaction 4-methyl-2-oxopentanoate(out) + H(+)(out) = 4-methyl-2-oxopentanoate(in) + H(+)(in). It carries out the reaction succinate(in) + 2 H(+)(in) = succinate(out) + 2 H(+)(out). Functionally, bidirectional proton-coupled monocarboxylate transporter. Catalyzes the rapid transport across the plasma membrane of many monocarboxylates such as lactate, pyruvate, acetate and the ketone bodies acetoacetate and beta-hydroxybutyrate, and thus contributes to the maintenance of intracellular pH. The transport direction is determined by the proton motive force and the concentration gradient of the substrate monocarboxylate. MCT1 is a major lactate exporter. Plays a role in cellular responses to a high-fat diet by modulating the cellular levels of lactate and pyruvate that contribute to the regulation of central metabolic pathways and insulin secretion, with concomitant effects on plasma insulin levels and blood glucose homeostasis. Facilitates the protonated monocarboxylate form of succinate export, that its transient protonation upon muscle cell acidification in exercising muscle and ischemic heart. Functions via alternate outward- and inward-open conformation states. Protonation and deprotonation of 309-Asp is essential for the conformational transition. The polypeptide is Monocarboxylate transporter 1 (SLC16A1) (Bos taurus (Bovine)).